The chain runs to 378 residues: Spermidine/putrescine import ATP-binding protein PotA (378 aa).

In terms of domain architecture, ABC transporter spans 18–248; that stretch reads VQLAGIRKCF…PKNLFVAGFI (231 aa). 50–57 provides a ligand contact to ATP; the sequence is GPSGCGKT.

The protein belongs to the ABC transporter superfamily. Spermidine/putrescine importer (TC 3.A.1.11.1) family. As to quaternary structure, the complex is composed of two ATP-binding proteins (PotA), two transmembrane proteins (PotB and PotC) and a solute-binding protein (PotD).

The protein resides in the cell inner membrane. It catalyses the reaction ATP + H2O + polyamine-[polyamine-binding protein]Side 1 = ADP + phosphate + polyamineSide 2 + [polyamine-binding protein]Side 1.. Part of the ABC transporter complex PotABCD involved in spermidine/putrescine import. Responsible for energy coupling to the transport system. The chain is Spermidine/putrescine import ATP-binding protein PotA from Shigella boydii serotype 4 (strain Sb227).